Here is a 342-residue protein sequence, read N- to C-terminus: S-adenosylmethionine:tRNA ribosyltransferase-isomerase (342 aa).

This sequence belongs to the QueA family. As to quaternary structure, monomer.

The protein localises to the cytoplasm. The catalysed reaction is 7-aminomethyl-7-carbaguanosine(34) in tRNA + S-adenosyl-L-methionine = epoxyqueuosine(34) in tRNA + adenine + L-methionine + 2 H(+). It functions in the pathway tRNA modification; tRNA-queuosine biosynthesis. Its function is as follows. Transfers and isomerizes the ribose moiety from AdoMet to the 7-aminomethyl group of 7-deazaguanine (preQ1-tRNA) to give epoxyqueuosine (oQ-tRNA). The polypeptide is S-adenosylmethionine:tRNA ribosyltransferase-isomerase (Campylobacter jejuni subsp. jejuni serotype O:2 (strain ATCC 700819 / NCTC 11168)).